The following is a 230-amino-acid chain: Ion-translocating oxidoreductase complex subunit E (230 aa).

Transmembrane regions (helical) follow at residues Leu-22–Gly-42, Thr-63–Val-83, Leu-86–Val-106, Trp-125–Leu-145, and Pro-182–Val-202.

This sequence belongs to the NqrDE/RnfAE family. As to quaternary structure, the complex is composed of six subunits: RsxA, RsxB, RsxC, RsxD, RsxE and RsxG.

The protein resides in the cell inner membrane. Its function is as follows. Part of a membrane-bound complex that couples electron transfer with translocation of ions across the membrane. Required to maintain the reduced state of SoxR. This is Ion-translocating oxidoreductase complex subunit E from Salmonella paratyphi A (strain ATCC 9150 / SARB42).